Reading from the N-terminus, the 481-residue chain is DNA primase DnaG (481 aa).

The Toprim domain occupies 169-243 (DAILVVEGRA…DVDYVARAPD (75 aa)). Positions 175, 217, and 219 each coordinate Mg(2+). Residues 275 to 393 (RRRNKLAAQA…ARKEREPSEF (119 aa)) form a disordered region. The span at 281–309 (AAQAAEKQAQAEAAQKAEAPAAAAPVQPQ) shows a compositional bias: low complexity. The span at 312 to 393 (YQQKEYPQRE…ARKEREPSEF (82 aa)) shows a compositional bias: basic and acidic residues.

Belongs to the archaeal DnaG primase family. In terms of assembly, forms a ternary complex with MCM helicase and DNA. Component of the archaeal exosome complex. Mg(2+) serves as cofactor.

It carries out the reaction ssDNA + n NTP = ssDNA/pppN(pN)n-1 hybrid + (n-1) diphosphate.. RNA polymerase that catalyzes the synthesis of short RNA molecules used as primers for DNA polymerase during DNA replication. Also part of the exosome, which is a complex involved in RNA degradation. Acts as a poly(A)-binding protein that enhances the interaction between heteromeric, adenine-rich transcripts and the exosome. The sequence is that of DNA primase DnaG from Methanocella arvoryzae (strain DSM 22066 / NBRC 105507 / MRE50).